Reading from the N-terminus, the 473-residue chain is Photosystem II CP43 reaction center protein (473 aa).

A propeptide spanning residues 1 to 14 is cleaved from the precursor; it reads MKTLYSLRRFYPVE. Thr-15 is subject to N-acetylthreonine. The residue at position 15 (Thr-15) is a Phosphothreonine. 5 helical membrane passes run 69 to 93, 134 to 155, 178 to 200, 255 to 275, and 291 to 312; these read LFEV…PHLA, LLGP…KDRN, KALY…RKIT, KPFA…LSYS, and WFNN…ASQA. Glu-367 is a binding site for [CaMn4O5] cluster. Residues 447–471 form a helical membrane-spanning segment; that stretch reads RARAAAAGFEKGIDRDFEPVLSMTP.

This sequence belongs to the PsbB/PsbC family. PsbC subfamily. As to quaternary structure, PSII is composed of 1 copy each of membrane proteins PsbA, PsbB, PsbC, PsbD, PsbE, PsbF, PsbH, PsbI, PsbJ, PsbK, PsbL, PsbM, PsbT, PsbX, PsbY, PsbZ, Psb30/Ycf12, at least 3 peripheral proteins of the oxygen-evolving complex and a large number of cofactors. It forms dimeric complexes. It depends on Binds multiple chlorophylls and provides some of the ligands for the Ca-4Mn-5O cluster of the oxygen-evolving complex. It may also provide a ligand for a Cl- that is required for oxygen evolution. PSII binds additional chlorophylls, carotenoids and specific lipids. as a cofactor.

Its subcellular location is the plastid. The protein localises to the chloroplast thylakoid membrane. Its function is as follows. One of the components of the core complex of photosystem II (PSII). It binds chlorophyll and helps catalyze the primary light-induced photochemical processes of PSII. PSII is a light-driven water:plastoquinone oxidoreductase, using light energy to abstract electrons from H(2)O, generating O(2) and a proton gradient subsequently used for ATP formation. The protein is Photosystem II CP43 reaction center protein of Lactuca sativa (Garden lettuce).